We begin with the raw amino-acid sequence, 453 residues long: GTPase Der (453 aa).

EngA-type G domains are found at residues 3 to 167 and 187 to 360; these read PIIV…ISEK and IKVA…EDSK. GTP contacts are provided by residues 9–16, 57–61, 119–122, 193–200, 240–244, and 305–308; these read GRTNVGKS, DTAGL, NKID, GRPNVGKS, DTAGA, and NKCD. One can recognise a KH-like domain in the interval 361-445; it reads RKISTSTLIR…PIQIQFKDNE (85 aa).

This sequence belongs to the TRAFAC class TrmE-Era-EngA-EngB-Septin-like GTPase superfamily. EngA (Der) GTPase family. In terms of assembly, associates with the 50S ribosomal subunit.

Its function is as follows. GTPase that plays an essential role in the late steps of ribosome biogenesis. This Buchnera aphidicola subsp. Acyrthosiphon pisum (strain Tuc7) protein is GTPase Der.